A 301-amino-acid polypeptide reads, in one-letter code: Heterogeneous nuclear ribonucleoprotein D-like (301 aa).

2 consecutive RRM domains span residues G29–E111 and K114–E193. N6-methyllysine is present on K42. Residue K90 forms a Glycyl lysine isopeptide (Lys-Gly) (interchain with G-Cter in SUMO2) linkage. The residue at position 97 (K97) is an N6-acetyllysine. S122 carries the post-translational modification Phosphoserine. Disordered regions lie at residues V194 to Q229 and G279 to Y301. Positions G204 to Q223 are enriched in gly residues. The segment at Q223–Y301 is necessary for interaction with TNPO1. R289 is modified (dimethylated arginine; alternate). R289 carries the post-translational modification Omega-N-methylarginine; alternate.

As to quaternary structure, interacts with TNPO1. Interacts with ZNF148. Dimethylation of Arg-289 is probably of the asymmetric type. In terms of tissue distribution, expressed in skeletal muscle, myoblast, myotube, heart, brain, liver, kidney, heart, lung, stomach, small intestine, large intestine, spleen, and testis (at protein level). Expressed in brain, skeletal muscle, heart, lung, liver, stomach, small intestine, large intestine, kidney, spleen and testis.

Its subcellular location is the nucleus. It localises to the cytoplasm. Its function is as follows. Acts as a transcriptional regulator. Promotes transcription repression. Promotes transcription activation in differentiated myotubes. Binds to double- and single-stranded DNA sequences. Binds to the transcription suppressor CATR sequence of the COX5B promoter. Binds with high affinity to RNA molecules that contain AU-rich elements (AREs) found within the 3'-UTR of many proto-oncogenes and cytokine mRNAs. Binds both to nuclear and cytoplasmic poly(A) mRNAs. Binds to poly(G) and poly(A), but not to poly(U) or poly(C) RNA homopolymers. Binds to the 5'-ACUAGC-3' RNA consensus sequence. This is Heterogeneous nuclear ribonucleoprotein D-like (Hnrnpdl) from Mus musculus (Mouse).